We begin with the raw amino-acid sequence, 351 residues long: Phosphoribosylformylglycinamidine cyclo-ligase (351 aa).

The protein belongs to the AIR synthase family.

Its subcellular location is the cytoplasm. It catalyses the reaction 2-formamido-N(1)-(5-O-phospho-beta-D-ribosyl)acetamidine + ATP = 5-amino-1-(5-phospho-beta-D-ribosyl)imidazole + ADP + phosphate + H(+). It participates in purine metabolism; IMP biosynthesis via de novo pathway; 5-amino-1-(5-phospho-D-ribosyl)imidazole from N(2)-formyl-N(1)-(5-phospho-D-ribosyl)glycinamide: step 2/2. The protein is Phosphoribosylformylglycinamidine cyclo-ligase of Idiomarina loihiensis (strain ATCC BAA-735 / DSM 15497 / L2-TR).